The chain runs to 125 residues: Large ribosomal subunit protein bL20 (125 aa).

It belongs to the bacterial ribosomal protein bL20 family.

Its function is as follows. Binds directly to 23S ribosomal RNA and is necessary for the in vitro assembly process of the 50S ribosomal subunit. It is not involved in the protein synthesizing functions of that subunit. The polypeptide is Large ribosomal subunit protein bL20 (Zymomonas mobilis subsp. mobilis (strain ATCC 31821 / ZM4 / CP4)).